The chain runs to 373 residues: 3 beta-hydroxysteroid dehydrogenase/Delta 5--&gt;4-isomerase type 1 (373 aa).

NADP(+) is bound by residues 10–15 (GAGGFL), tyrosine 155, and lysine 159. Lysine 159 serves as the catalytic Proton donor. The chain crosses the membrane as a helical span at residues 288–308 (LSLMYWIGFLLEIVSFLLRPI).

This sequence belongs to the 3-beta-HSD family. In terms of tissue distribution, placenta and skin. Predominantly expressed in mammary gland tissue.

Its subcellular location is the endoplasmic reticulum membrane. It localises to the mitochondrion membrane. The enzyme catalyses a 3beta-hydroxy-Delta(5)-steroid + NAD(+) = a 3-oxo-Delta(5)-steroid + NADH + H(+). It catalyses the reaction pregnenolone + NAD(+) = pregn-5-ene-3,20-dione + NADH + H(+). It carries out the reaction 3beta-hydroxyandrost-5-en-17-one + NAD(+) = androst-5-ene-3,17-dione + NADH + H(+). The catalysed reaction is androst-5-en-3beta,17beta-diol + NAD(+) = 17beta-hydroxy-androst-5-en-3-one + NADH + H(+). The enzyme catalyses a 3beta-hydroxysteroid + NADP(+) = a 3-oxosteroid + NADPH + H(+). It catalyses the reaction 5alpha-androstane-3beta,17beta-diol + NADP(+) = 17beta-hydroxy-5alpha-androstan-3-one + NADPH + H(+). It carries out the reaction 3beta-hydroxy-5alpha-androstan-17-one + NADP(+) = 5alpha-androstan-3,17-dione + NADPH + H(+). The catalysed reaction is a 3-oxo-Delta(5)-steroid = a 3-oxo-Delta(4)-steroid. The enzyme catalyses pregn-5-ene-3,20-dione = progesterone. It catalyses the reaction androst-5-ene-3,17-dione = androst-4-ene-3,17-dione. It carries out the reaction 17beta-hydroxy-androst-5-en-3-one = testosterone. The catalysed reaction is 5alpha-androstane-3beta,17beta-diol + NAD(+) = 17beta-hydroxy-5alpha-androstan-3-one + NADH + H(+). The protein operates within steroid hormone biosynthesis. It participates in steroid metabolism. Functionally, a bifunctional enzyme responsible for the oxidation and isomerization of 3beta-hydroxy-Delta(5)-steroid precursors to 3-oxo-Delta(4)-steroids, an essential step in steroid hormone biosynthesis. Specifically catalyzes the conversion of pregnenolone to progesterone, 17alpha-hydroxypregnenolone to 17alpha-hydroxyprogesterone, dehydroepiandrosterone (DHEA) to 4-androstenedione, and androstenediol to testosterone. Additionally, catalyzes the interconversion between 3beta-hydroxy and 3-oxo-5alpha-androstane steroids controlling the bioavalability of the active forms. Specifically converts dihydrotestosterone to its inactive form 5alpha-androstanediol, that does not bind androgen receptor/AR. Also converts androstanedione, a precursor of testosterone and estrone, to epiandrosterone. Expected to use NAD(+) as preferred electron donor for the 3beta-hydroxy-steroid dehydrogenase activity and NADPH for the 3-ketosteroid reductase activity. The sequence is that of 3 beta-hydroxysteroid dehydrogenase/Delta 5--&gt;4-isomerase type 1 from Homo sapiens (Human).